A 349-amino-acid polypeptide reads, in one-letter code: Phenylalanine--tRNA ligase alpha subunit (349 aa).

A Mg(2+)-binding site is contributed by glutamate 259.

The protein belongs to the class-II aminoacyl-tRNA synthetase family. Phe-tRNA synthetase alpha subunit type 1 subfamily. As to quaternary structure, tetramer of two alpha and two beta subunits. It depends on Mg(2+) as a cofactor.

It is found in the cytoplasm. The enzyme catalyses tRNA(Phe) + L-phenylalanine + ATP = L-phenylalanyl-tRNA(Phe) + AMP + diphosphate + H(+). The sequence is that of Phenylalanine--tRNA ligase alpha subunit from Lactobacillus helveticus (strain DPC 4571).